The following is a 175-amino-acid chain: MPTPADDLVVIGKIVSVYGIRGEVKVYSFTDPLDNLLDYRRWTLRRDGETRQAELVRGRLHGKVLAAKLKGLDDREEARTFTGYEICIPRSELPSLEEGEYYWYQLEGLKVIDQGGQLLGVIDHLLETGANDVMVVKPCAGSLDDRERLLPYTGQCVLSIDLAAGEMRVDWDADF.

Positions 98–175 (EGEYYWYQLE…EMRVDWDADF (78 aa)) constitute a PRC barrel domain.

It belongs to the RimM family. Binds ribosomal protein uS19.

Its subcellular location is the cytoplasm. Its function is as follows. An accessory protein needed during the final step in the assembly of 30S ribosomal subunit, possibly for assembly of the head region. Essential for efficient processing of 16S rRNA. May be needed both before and after RbfA during the maturation of 16S rRNA. It has affinity for free ribosomal 30S subunits but not for 70S ribosomes. The chain is Ribosome maturation factor RimM from Pseudomonas paraeruginosa (strain DSM 24068 / PA7) (Pseudomonas aeruginosa (strain PA7)).